An 833-amino-acid polypeptide reads, in one-letter code: A disintegrin and metalloproteinase with thrombospondin motifs 4 (833 aa).

The first 49 residues, 1–49, serve as a signal peptide directing secretion; it reads MSQMGLHPRRGLTGHWLQRFQPCLPLHTVQWRRLLLLAFLLSLAWPASP. Positions 50 to 208 are excised as a propeptide; the sequence is LPREEEIVFP…PSPISRRTKR (159 aa). N63 carries N-linked (GlcNAc...) asparagine glycosylation. Residues 180–204 are disordered; it reads KSPASSQGPMCTVKAPSGSPSPISR. The Cysteine switch motif lies at 188–195; the sequence is PMCTVKAP. Residue C190 coordinates Zn(2+). Positions 214–424 constitute a Peptidase M12B domain; the sequence is RFVETLVVAD…GYGHCLLDKP (211 aa). Cystine bridges form between C289/C341, C318/C323, C335/C419, C373/C403, C445/C468, C456/C478, C463/C497, C491/C502, C528/C565, C532/C570, and C543/C555. An N-linked (GlcNAc...) asparagine glycan is attached at N299. H357 is a Zn(2+) binding site. Residue E358 is part of the active site. 2 residues coordinate Zn(2+): H361 and H367. Positions 433-515 constitute a Disintegrin domain; it reads TFPGKDYDAD…DQLKDFNVPQ (83 aa). Positions 516-571 constitute a TSP type-1 domain; sequence AGGWGPWGPWGDCSRTCGGGVQFSSRDCTRPVPRNGGKYCEGRRTRFRSCNTENCP. The interval 682–833 is spacer; the sequence is SKQSGSFKKF…LRKRPWAGRK (152 aa).

Interacts with SRPX2. Requires Zn(2+) as cofactor. Post-translationally, the precursor is cleaved by a furin endopeptidase. Glycosylated. Can be O-fucosylated by POFUT2 on a serine or a threonine residue found within the consensus sequence C1-X(2)-(S/T)-C2-G of the TSP type-1 repeat domains where C1 and C2 are the first and second cysteine residue of the repeat, respectively. Fucosylated repeats can then be further glycosylated by the addition of a beta-1,3-glucose residue by the glucosyltransferase, B3GALTL. Fucosylation mediates the efficient secretion of ADAMTS family members. Can also be C-glycosylated with one or two mannose molecules on tryptophan residues within the consensus sequence W-X-X-W of the TPRs, and N-glycosylated. These other glycosylations can also facilitate secretion.

The protein localises to the secreted. It localises to the extracellular space. The protein resides in the extracellular matrix. The enzyme catalyses Glutamyl endopeptidase. Bonds cleaved include 370-Thr-Glu-Gly-Glu-|-Ala-Arg-Gly-Ser-377 in the interglobular domain of mammalian aggrecan.. Its function is as follows. Cleaves aggrecan, a cartilage proteoglycan, at the '392-Glu-|-Ala-393' site and may be involved in its turnover. Also cleaves COMP. May play an important role in the destruction of aggrecan in arthritic diseases. The polypeptide is A disintegrin and metalloproteinase with thrombospondin motifs 4 (Adamts4) (Mus musculus (Mouse)).